We begin with the raw amino-acid sequence, 304 residues long: Ribosomal RNA small subunit methyltransferase H (304 aa).

S-adenosyl-L-methionine-binding positions include 36-38, D55, F81, D102, and Q109; that span reads CGH.

Belongs to the methyltransferase superfamily. RsmH family.

It localises to the cytoplasm. The enzyme catalyses cytidine(1402) in 16S rRNA + S-adenosyl-L-methionine = N(4)-methylcytidine(1402) in 16S rRNA + S-adenosyl-L-homocysteine + H(+). Its function is as follows. Specifically methylates the N4 position of cytidine in position 1402 (C1402) of 16S rRNA. This Onion yellows phytoplasma (strain OY-M) protein is Ribosomal RNA small subunit methyltransferase H.